Consider the following 95-residue polypeptide: Large ribosomal subunit protein bL25 (95 aa).

Belongs to the bacterial ribosomal protein bL25 family. In terms of assembly, part of the 50S ribosomal subunit; part of the 5S rRNA/L5/L18/L25 subcomplex. Contacts the 5S rRNA. Binds to the 5S rRNA independently of L5 and L18.

In terms of biological role, this is one of the proteins that binds to the 5S RNA in the ribosome where it forms part of the central protuberance. This chain is Large ribosomal subunit protein bL25, found in Shewanella pealeana (strain ATCC 700345 / ANG-SQ1).